The sequence spans 214 residues: Large ribosomal subunit protein uL3 (214 aa).

The interval 134–153 is disordered; the sequence is ATHGNSLSHRAPGSIGQNQT. Glutamine 152 carries the N5-methylglutamine modification.

Belongs to the universal ribosomal protein uL3 family. Part of the 50S ribosomal subunit. Forms a cluster with proteins L14 and L19. In terms of processing, methylated by PrmB.

One of the primary rRNA binding proteins, it binds directly near the 3'-end of the 23S rRNA, where it nucleates assembly of the 50S subunit. This is Large ribosomal subunit protein uL3 from Buchnera aphidicola subsp. Baizongia pistaciae (strain Bp).